Here is a 410-residue protein sequence, read N- to C-terminus: Peptidase T (410 aa).

Histidine 79 contributes to the Zn(2+) binding site. Aspartate 81 is a catalytic residue. Aspartate 142 lines the Zn(2+) pocket. The active-site Proton acceptor is glutamate 176. The Zn(2+) site is built by glutamate 177, aspartate 199, and histidine 381.

The protein belongs to the peptidase M20B family. Zn(2+) is required as a cofactor.

It localises to the cytoplasm. It catalyses the reaction Release of the N-terminal residue from a tripeptide.. Its function is as follows. Cleaves the N-terminal amino acid of tripeptides. The chain is Peptidase T from Bacillus licheniformis (strain ATCC 14580 / DSM 13 / JCM 2505 / CCUG 7422 / NBRC 12200 / NCIMB 9375 / NCTC 10341 / NRRL NRS-1264 / Gibson 46).